The sequence spans 141 residues: Large ribosomal subunit protein uL11 (141 aa).

This sequence belongs to the universal ribosomal protein uL11 family. As to quaternary structure, part of the ribosomal stalk of the 50S ribosomal subunit. Interacts with L10 and the large rRNA to form the base of the stalk. L10 forms an elongated spine to which L12 dimers bind in a sequential fashion forming a multimeric L10(L12)X complex. In terms of processing, one or more lysine residues are methylated.

In terms of biological role, forms part of the ribosomal stalk which helps the ribosome interact with GTP-bound translation factors. This chain is Large ribosomal subunit protein uL11, found in Chlamydia trachomatis serovar L2 (strain ATCC VR-902B / DSM 19102 / 434/Bu).